Here is a 372-residue protein sequence, read N- to C-terminus: Steroid C26-monooxygenase (372 aa).

C314 is a heme binding site.

Belongs to the cytochrome P450 family. Heme serves as cofactor.

The enzyme catalyses cholest-4-en-3-one + 6 reduced [2Fe-2S]-[ferredoxin] + 3 O2 + 5 H(+) = (25R)-3-oxocholest-4-en-26-oate + 6 oxidized [2Fe-2S]-[ferredoxin] + 4 H2O. It functions in the pathway steroid metabolism; cholesterol degradation. In terms of biological role, involved in the utilization of cholesterol as the sole carbon and energy source by degrading the side chain during infection. Primarily catalyzes the sequential oxidation of the terminal methyl of cholest-4-en-3-one into (25R)-26-hydroxycholest-4-en-3-one (alcohol), (25R)-26-oxocholest-4-en-3-one (aldehyde), to finally yield the carboxylic acid (25R)-3-oxocholest-4-en-26-oate. Also able to sequentially oxidize cholesterol itself, not only cholest-4-en-3-one. This chain is Steroid C26-monooxygenase (cyp142), found in Mycobacterium tuberculosis (strain CDC 1551 / Oshkosh).